Here is a 375-residue protein sequence, read N- to C-terminus: MKQKVIVGLSGGVDSSVACYLLLEQGYEVEGLFMRNWDSATNNDILGNRNINDDICPQEQDYLDAKAVADKLNIKLYRVDFIKEYWDYVFSYFIEEYKKARTPNPDILCNKYIKFDKFLNYAINQLNADYIAMGHYAKVEFNKTTNQYELIKASDTNKDQTYFLSQLNQKQLSKTLFPLANLTKEQVRKIALKQNLITANKKDSTGICFIGERSFTNFLQNYIPNQTGDIVDIKTNKVLGQHIGVMYYTIGQRKGINLSGMSEPYYVADKDVKKNILYVCSTSDQSYLHSTSCLVNDINWILDISKYVDDINQFECQAKFRYRQIDNKVVVKKIDDNNYQVIFKKPLKAITIGQQAVFYLNDICLGGAVIDKVIK.

Residues 8-15 and Met34 each bind ATP; that span reads GLSGGVDS. Positions 104-106 are interaction with target base in tRNA; the sequence is NPD. Cys109 serves as the catalytic Nucleophile. Cys109 and Cys208 are oxidised to a cystine. Gly134 lines the ATP pocket. Residues 158–160 form an interaction with tRNA region; that stretch reads KDQ. Cys208 acts as the Cysteine persulfide intermediate in catalysis. The interaction with tRNA stretch occupies residues 321–322; the sequence is RY.

The protein belongs to the MnmA/TRMU family.

It localises to the cytoplasm. It catalyses the reaction S-sulfanyl-L-cysteinyl-[protein] + uridine(34) in tRNA + AH2 + ATP = 2-thiouridine(34) in tRNA + L-cysteinyl-[protein] + A + AMP + diphosphate + H(+). Functionally, catalyzes the 2-thiolation of uridine at the wobble position (U34) of tRNA, leading to the formation of s(2)U34. This is tRNA-specific 2-thiouridylase MnmA from Mycoplasma mycoides subsp. mycoides SC (strain CCUG 32753 / NCTC 10114 / PG1).